Consider the following 365-residue polypeptide: Aminomethyltransferase (365 aa).

The protein belongs to the GcvT family. In terms of assembly, the glycine cleavage system is composed of four proteins: P, T, L and H.

It carries out the reaction N(6)-[(R)-S(8)-aminomethyldihydrolipoyl]-L-lysyl-[protein] + (6S)-5,6,7,8-tetrahydrofolate = N(6)-[(R)-dihydrolipoyl]-L-lysyl-[protein] + (6R)-5,10-methylene-5,6,7,8-tetrahydrofolate + NH4(+). In terms of biological role, the glycine cleavage system catalyzes the degradation of glycine. The protein is Aminomethyltransferase of Chlorobaculum tepidum (strain ATCC 49652 / DSM 12025 / NBRC 103806 / TLS) (Chlorobium tepidum).